Reading from the N-terminus, the 535-residue chain is MAYLLREGTQRSTGNEVILNNIAVAKILLEMLKSSLGPKGLDKMLVEGQDVTITNDGATIVKNMEVQHPTAKLLIETAKTVDTEVGDGTTSVVVLAGLLLEKAEDLLNQKIHPTVIIEGYRKALNSSLELLKNIADKISPEDRKIVHDLVYTTLSSKFFSTEHTLEKIINLVIDASLAVLDKRDGSYDLDIKNIKIVKVNGGEFDDSELINGIVVDKEPTNENMPKRVENVKVMLADFPLKLEKTEISMKLGISDPTQIKGYLDEQTAYVKQMVDKIKAMGVKLFITQKDIDEIASYLMGKNGIMALKNVKRSDIELLSRATGAKIASSMKDANESDLGEAKLVEVRNLGKNKYLFIQSDKAKAVTVIIKGSNNMITDEAERSLNDAFNSIRNLLLEPYIVAGGGAVEEELAKRLRDDARKVIGKEQLAFNAFADALEEYVSILSETAGMDPISALTEIRHKHATGLKNAGIDVTKARIYDNMLELRVIDSLKVKEQVLKSATEAATAILKIDDMIAAAPAKQQPQPQQPNPYLG.

This sequence belongs to the TCP-1 chaperonin family. As to quaternary structure, forms a Heterooligomeric complex of two stacked eight-membered rings.

In terms of biological role, molecular chaperone; binds unfolded polypeptides in vitro, and has a weak ATPase activity. The chain is Thermosome subunit gamma (thsC) from Saccharolobus solfataricus (strain ATCC 35092 / DSM 1617 / JCM 11322 / P2) (Sulfolobus solfataricus).